Reading from the N-terminus, the 233-residue chain is Putative N-acetylmannosamine-6-phosphate 2-epimerase (233 aa).

It belongs to the NanE family.

It catalyses the reaction an N-acyl-D-glucosamine 6-phosphate = an N-acyl-D-mannosamine 6-phosphate. It functions in the pathway amino-sugar metabolism; N-acetylneuraminate degradation; D-fructose 6-phosphate from N-acetylneuraminate: step 3/5. Functionally, converts N-acetylmannosamine-6-phosphate (ManNAc-6-P) to N-acetylglucosamine-6-phosphate (GlcNAc-6-P). This Yersinia pseudotuberculosis serotype IB (strain PB1/+) protein is Putative N-acetylmannosamine-6-phosphate 2-epimerase.